We begin with the raw amino-acid sequence, 47 residues long: Large ribosomal subunit protein bL34 (47 aa).

A disordered region spans residues 1 to 47 (MVTEGLKPHISIKKKKRKSGFLARMRTKSGRKIIARRRRKGRKRLAP). Residues 10–47 (ISIKKKKRKSGFLARMRTKSGRKIIARRRRKGRKRLAP) are compositionally biased toward basic residues.

Belongs to the bacterial ribosomal protein bL34 family.

In Aquifex aeolicus (strain VF5), this protein is Large ribosomal subunit protein bL34 (rpmH).